The chain runs to 355 residues: Zinc transporter ZIP13 homolog (355 aa).

Asn4 carries N-linked (GlcNAc...) asparagine glycosylation. 3 consecutive transmembrane segments (helical) span residues 37 to 57, 79 to 99, and 118 to 138; these read VFSL…LIII, VLLS…LLPE, and LWVL…SGYA. Asn218 is a glycosylation site (N-linked (GlcNAc...) asparagine). Transmembrane regions (helical) follow at residues 273 to 293 and 301 to 321; these read LLTA…SGVT and SWIM…TVLP.

This sequence belongs to the ZIP transporter (TC 2.A.5) family. KE4/Catsup subfamily.

The protein localises to the basolateral cell membrane. It is found in the golgi apparatus membrane. In terms of biological role, involved in zinc transport and homeostasis. The sequence is that of Zinc transporter ZIP13 homolog (Zip99C) from Drosophila melanogaster (Fruit fly).